The primary structure comprises 167 residues: Translationally-controlled tumor protein homolog (167 aa).

A TCTP domain is found at 1–167; the sequence is MIIFKDVISN…WKHGIKEEKI (167 aa).

It belongs to the TCTP family.

The protein resides in the cytoplasm. The protein localises to the cytoskeleton. Functionally, involved in protein synthesis. Involved in microtubule stabilization. This is Translationally-controlled tumor protein homolog from Yarrowia lipolytica (strain CLIB 122 / E 150) (Yeast).